A 389-amino-acid polypeptide reads, in one-letter code: PqqA peptide cyclase (389 aa).

The region spanning 19-234 (VGLPLWLLAE…TNEYRARLEA (216 aa)) is the Radical SAM core domain. 3 residues coordinate [4Fe-4S] cluster: cysteine 33, cysteine 37, and cysteine 40.

This sequence belongs to the radical SAM superfamily. PqqE family. In terms of assembly, interacts with PqqD. The interaction is necessary for activity of PqqE. It depends on [4Fe-4S] cluster as a cofactor.

The catalysed reaction is [PQQ precursor protein] + S-adenosyl-L-methionine = E-Y cross-linked-[PQQ precursor protein] + 5'-deoxyadenosine + L-methionine + H(+). It functions in the pathway cofactor biosynthesis; pyrroloquinoline quinone biosynthesis. Its function is as follows. Catalyzes the cross-linking of a glutamate residue and a tyrosine residue in the PqqA protein as part of the biosynthesis of pyrroloquinoline quinone (PQQ). This Pseudomonas syringae pv. syringae (strain B728a) protein is PqqA peptide cyclase.